A 497-amino-acid polypeptide reads, in one-letter code: Probable malate:quinone oxidoreductase (497 aa).

It belongs to the MQO family. Requires FAD as cofactor.

It carries out the reaction (S)-malate + a quinone = a quinol + oxaloacetate. It participates in carbohydrate metabolism; tricarboxylic acid cycle; oxaloacetate from (S)-malate (quinone route): step 1/1. In Wolinella succinogenes (strain ATCC 29543 / DSM 1740 / CCUG 13145 / JCM 31913 / LMG 7466 / NCTC 11488 / FDC 602W) (Vibrio succinogenes), this protein is Probable malate:quinone oxidoreductase.